Reading from the N-terminus, the 132-residue chain is Small ribosomal subunit protein uS11 (132 aa).

The protein belongs to the universal ribosomal protein uS11 family. Part of the 30S ribosomal subunit. Interacts with proteins S7 and S18. Binds to IF-3.

Functionally, located on the platform of the 30S subunit, it bridges several disparate RNA helices of the 16S rRNA. Forms part of the Shine-Dalgarno cleft in the 70S ribosome. This is Small ribosomal subunit protein uS11 from Alcanivorax borkumensis (strain ATCC 700651 / DSM 11573 / NCIMB 13689 / SK2).